A 576-amino-acid chain; its full sequence is MLRTVSNAFTTRSHVGSTASSNSWSTIVPALARFGSIGVLRAAVELINDGEKPDASPLVHLLRVSGNYGYVSLCRQLHGYVTKHGFVSNTRLSNSLMRFYKTSDSLEDAHKVFDEMPDPDVISWNSLVSGYVQSGRFQEGICLFLELHRSDVFPNEFSFTAALAACARLHLSPLGACIHSKLVKLGLEKGNVVVGNCLIDMYGKCGFMDDAVLVFQHMEEKDTVSWNAIVASCSRNGKLELGLWFFHQMPNPDTVTYNELIDAFVKSGDFNNAFQVLSDMPNPNSSSWNTILTGYVNSEKSGEATEFFTKMHSSGVRFDEYSLSIVLAAVAALAVVPWGSLIHACAHKLGLDSRVVVASALIDMYSKCGMLKHAELMFWTMPRKNLIVWNEMISGYARNGDSIEAIKLFNQLKQERFLKPDRFTFLNLLAVCSHCEVPMEVMLGYFEMMINEYRIKPSVEHCCSLIRAMGQRGEVWQAKQVIQEFGFGYDGVAWRALLGACSARKDLKAAKTVAAKMIELGDADKDEYLYIVMSNLYAYHERWREVGQIRKIMRESGVLKEVGSSWIDSRTKCSSY.

14 PPR repeats span residues 20 to 53 (SSNSWSTIVPALARFGSIGVLRAAVELINDGEKP), 54 to 88 (DASPLVHLLRVSGNYGYVSLCRQLHGYVTKHGFVS), 89 to 119 (NTRLSNSLMRFYKTSDSLEDAHKVFDEMPDP), 120 to 154 (DVISWNSLVSGYVQSGRFQEGICLFLELHRSDVFP), 155 to 189 (NEFSFTAALAACARLHLSPLGACIHSKLVKLGLEK), 191 to 225 (NVVVGNCLIDMYGKCGFMDDAVLVFQHMEEKDTVS), 226 to 252 (WNAIVASCSRNGKLELGLWFFHQMPNP), 253 to 287 (DTVTYNELIDAFVKSGDFNNAFQVLSDMPNPNSSS), 288 to 318 (WNTILTGYVNSEKSGEATEFFTKMHSSGVRF), 319 to 353 (DEYSLSIVLAAVAALAVVPWGSLIHACAHKLGLDS), 354 to 384 (RVVVASALIDMYSKCGMLKHAELMFWTMPRK), 385 to 419 (NLIVWNEMISGYARNGDSIEAIKLFNQLKQERFLK), 421 to 452 (DRFTFLNLLAVCSHCEVPMEVMLGYFEMMINE), and 458 to 488 (SVEHCCSLIRAMGQRGEVWQAKQVIQEFGFG). The segment at 493 to 570 (AWRALLGACS…EVGSSWIDSR (78 aa)) is type E motif.

It belongs to the PPR family. PCMP-E subfamily.

The sequence is that of Putative pentatricopeptide repeat-containing protein At5g47460 (PCMP-E103) from Arabidopsis thaliana (Mouse-ear cress).